The primary structure comprises 426 residues: Serine protease HTRA2, mitochondrial (426 aa).

A mitochondrion-targeting transit peptide spans 1-30; the sequence is MALRGSHRLDDFIRRCSALTLFHSQAPSRR. A disordered region spans residues 30-59; sequence RVSHCGRDRRQQQDPPGQGRQEQQESGGGH. Residues 31 to 78 constitute a propeptide that is removed on maturation; the sequence is VSHCGRDRRQQQDPPGQGRQEQQESGGGHWSRFGWRSLIRFFVPFSLG. Positions 42 to 54 are enriched in low complexity; that stretch reads QDPPGQGRQEQQE. The chain crosses the membrane as a helical span at residues 68–86; it reads LIRFFVPFSLGAVASSLVI. The IAP-binding motif lies at 79 to 82; sequence AVAS. The interval 143–306 is serine protease; the sequence is SNGSGFIIEQ…IPIDYVKVFL (164 aa). Active-site charge relay system residues include His161, Asp193, and Ser270. Residues 329–414 form the PDZ domain; it reads MGITMLTLTP…HLDIVILRGV (86 aa).

Belongs to the peptidase S1C family. As to quaternary structure, interacts with th/DIAP1 (via BIR 2 domain).

The protein localises to the mitochondrion intermembrane space. The protein resides in the mitochondrion membrane. The enzyme catalyses Cleavage of non-polar aliphatic amino-acids at the P1 position, with a preference for Val, Ile and Met. At the P2 and P3 positions, Arg is selected most strongly with a secondary preference for other hydrophilic residues.. In terms of biological role, serine protease that shows proteolytic activity against a non-specific substrate beta-casein. Promotes or induces cell death either by direct binding to and inhibition of BIRC proteins (also called inhibitor of apoptosis proteins, IAPs), leading to an increase in caspase activity, or by a BIRC inhibition-independent, caspase-independent and serine protease activity-dependent mechanism. Can antagonize antiapoptotic activity of th/Diap1 by directly inducing the degradation of th/Diap1. The chain is Serine protease HTRA2, mitochondrial from Drosophila ananassae (Fruit fly).